The chain runs to 411 residues: MLSLREQQLQVWFKNRRAKLARERRLQQQPQRVPGQRGRGARAAPLVPAASASAPQRGPSGILPAAEPTICSLHQAWGGPGCRAQKGIPAALSPGPGPIPAPIPGPAQIPGPLPGSIPGPIPGPAQIPSPIPAPIPGPISGPVQIPGPFRGPIPGPISGPAPIPGPISGPFSGPNPGPIPGPNPGPIPGPISGPIPGPISVPIPGPIPGPISGPISGPNPGPIPGPIPGPISGPNPGPIPGPISGPNPGLIPGPIPGPISGPGPIIGPIPSPAQIPGPGRLQGPGPILSPGRMRSPGSLPGLAPILGPGSGPGSGSVPAPIPGPGSLPAPAPLWPQSPDASDFLPDTQLFPHFTELLLPLDPLEGSSVSTMTSQYQEGDDSMGKKHSGSQPQEEGGSVNENHSGPRLLLDL.

Positions 3–24 form a DNA-binding region, homeobox; the sequence is SLREQQLQVWFKNRRAKLARER. Disordered stretches follow at residues 20–63, 88–246, 286–340, and 363–411; these read LARE…SGIL, IPAA…ISGP, PILS…SPDA, and LEGS…LLDL. Low complexity predominate over residues 27–55; the sequence is QQQPQRVPGQRGRGARAAPLVPAASASAP. 2 stretches are compositionally biased toward pro residues: residues 95–139 and 149–246; these read GPGP…PGPI and FRGP…ISGP. Residues 295 to 307 are compositionally biased toward low complexity; sequence SPGSLPGLAPILG. Residues 319 to 335 show a composition bias toward pro residues; sequence APIPGPGSLPAPAPLWP. Composition is skewed to polar residues over residues 366–376 and 388–402; these read SSVSTMTSQYQ and GSQP…NENH.

It belongs to the paired homeobox family.

It localises to the nucleus. Transcription factor expressed after fertilization required for zygotic genome activation (ZGA), a critical event in early embryonic development during which the developmental control passes from maternally provided mRNAs to the expression of the zygotic genome after fertilization. Binds and activates expression of key ZGA marker genes, such as NANOGNB, ZSCAN4, DUXB, KLF5 and DPPA3. Binds to regulatory DNA sequences containing a 5'-TAATCC-3' sequence motif. The sequence is that of Tetra-peptide repeat homeobox protein 1 from Homo sapiens (Human).